Reading from the N-terminus, the 262-residue chain is Polyamine aminopropyltransferase (262 aa).

Positions 1-249 (MWITQEITPY…DIHRAAFALP (249 aa)) constitute a PABS domain. Position 29 (Asn-29) interacts with S-methyl-5'-thioadenosine. A spermidine-binding site is contributed by Asp-83. Asp-155 functions as the Proton acceptor in the catalytic mechanism.

This sequence belongs to the spermidine/spermine synthase family. As to quaternary structure, homodimer or homotetramer.

It is found in the cytoplasm. The enzyme catalyses S-adenosyl 3-(methylsulfanyl)propylamine + putrescine = S-methyl-5'-thioadenosine + spermidine + H(+). It functions in the pathway amine and polyamine biosynthesis; spermidine biosynthesis; spermidine from putrescine: step 1/1. Catalyzes the irreversible transfer of a propylamine group from the amino donor S-adenosylmethioninamine (decarboxy-AdoMet) to putrescine (1,4-diaminobutane) to yield spermidine. The protein is Polyamine aminopropyltransferase of Helicobacter pylori (strain G27).